Consider the following 208-residue polypeptide: Large ribosomal subunit protein uL4 (208 aa).

Residues 44-85 (RQGTKKTKTRAEVRGGGKKPWRQKGTGRARQGSIRAPHWRGG) form a disordered region. Residues 59 to 70 (GGKKPWRQKGTG) show a composition bias toward basic residues.

It belongs to the universal ribosomal protein uL4 family. Part of the 50S ribosomal subunit.

Functionally, one of the primary rRNA binding proteins, this protein initially binds near the 5'-end of the 23S rRNA. It is important during the early stages of 50S assembly. It makes multiple contacts with different domains of the 23S rRNA in the assembled 50S subunit and ribosome. In terms of biological role, forms part of the polypeptide exit tunnel. This is Large ribosomal subunit protein uL4 from Mesoplasma florum (strain ATCC 33453 / NBRC 100688 / NCTC 11704 / L1) (Acholeplasma florum).